A 148-amino-acid chain; its full sequence is FAD synthase (148 aa).

ATP-binding positions include 11–12 (TF), 16–19 (HPGH), asparagine 94, and tyrosine 121.

The protein belongs to the archaeal FAD synthase family. In terms of assembly, homodimer. The cofactor is a divalent metal cation.

It carries out the reaction FMN + ATP + H(+) = FAD + diphosphate. It participates in cofactor biosynthesis; FAD biosynthesis; FAD from FMN: step 1/1. Its function is as follows. Catalyzes the transfer of the AMP portion of ATP to flavin mononucleotide (FMN) to produce flavin adenine dinucleotide (FAD) coenzyme. This is FAD synthase from Methanoregula boonei (strain DSM 21154 / JCM 14090 / 6A8).